The sequence spans 391 residues: Anhydro-N-acetylmuramic acid kinase (391 aa).

Residue 9-16 coordinates ATP; that stretch reads GTSVDGID.

The protein belongs to the anhydro-N-acetylmuramic acid kinase family.

It carries out the reaction 1,6-anhydro-N-acetyl-beta-muramate + ATP + H2O = N-acetyl-D-muramate 6-phosphate + ADP + H(+). It functions in the pathway amino-sugar metabolism; 1,6-anhydro-N-acetylmuramate degradation. Its pathway is cell wall biogenesis; peptidoglycan recycling. Functionally, catalyzes the specific phosphorylation of 1,6-anhydro-N-acetylmuramic acid (anhMurNAc) with the simultaneous cleavage of the 1,6-anhydro ring, generating MurNAc-6-P. Is required for the utilization of anhMurNAc either imported from the medium or derived from its own cell wall murein, and thus plays a role in cell wall recycling. This Gloeothece citriformis (strain PCC 7424) (Cyanothece sp. (strain PCC 7424)) protein is Anhydro-N-acetylmuramic acid kinase.